A 1261-amino-acid polypeptide reads, in one-letter code: AT-rich interactive domain-containing protein 4A (1261 aa).

Positions 4 to 121 (ADEPAYLTVG…RHFAESETLD (118 aa)) are DNA-binding. Disordered regions lie at residues 142–169 (RGRR…DKRR), 273–310 (ESSS…LDPE), and 435–470 (APEM…PRGR). Composition is skewed to acidic residues over residues 151 to 165 (TEDE…EEDE) and 276 to 289 (SSDD…EHEE). Residues 290 to 299 (EKEKEAKKEE) are compositionally biased toward basic and acidic residues. Residues 300 to 310 (EELPEEELDPE) show a composition bias toward acidic residues. Residues 309 to 401 (PEERDNFLQQ…YLYGFEEYCR (93 aa)) form the ARID domain. Lys481 participates in a covalent cross-link: Glycyl lysine isopeptide (Lys-Gly) (interchain with G-Cter in SUMO2). Disordered stretches follow at residues 498–582 (LENK…GTKV), 633–768 (WPLD…EAGD), and 842–953 (FSST…EDAM). Basic and acidic residues predominate over residues 512-522 (PAAKREHELLF). A compositionally biased stretch (basic residues) spans 526 to 536 (STPKNKEKKIK). Positions 541 to 551 (SERDSDEEEEK) are enriched in acidic residues. Basic and acidic residues predominate over residues 552–564 (SQEREETESRCDS). Residues 565 to 574 (EGEDEEDDTE) are compositionally biased toward acidic residues. One can recognise a Tudor-knot domain in the interval 579-631 (GTKVKVKYGRGKTQKIYEASIKSTEMDDGEILYLVHYYGWNVRYDEWVKADRI). Over residues 640–649 (PKKKQKKKVK) the composition is skewed to basic residues. The span at 650–665 (NKEDSEKDEKRDEERQ) shows a compositional bias: basic and acidic residues. Over residues 676–689 (STFSPNMPYSLSKT) the composition is skewed to polar residues. The residue at position 679 (Ser679) is a Phosphoserine. Over residues 690–702 (SNSEGKSDSCSSD) the composition is skewed to low complexity. The span at 708–753 (QLEKSSGGEDLSPDVKEELEKNENAHDDKLDEENPKIVHISKENDR) shows a compositional bias: basic and acidic residues. Ser719 bears the Phosphoserine mark. Glycyl lysine isopeptide (Lys-Gly) (interchain with G-Cter in SUMO2) cross-links involve residues Lys723 and Lys743. Residue Ser867 is modified to Phosphoserine. Composition is skewed to basic and acidic residues over residues 899-909 (KGAHVEQHFET) and 929-947 (TSEK…TPLK). The tract at residues 955–968 (LIGPETLVCHEVDL) is retinoblastoma protein binding. The span at 1067–1080 (HERESREKGQKRPS) shows a compositional bias: basic and acidic residues. Disordered regions lie at residues 1067-1173 (HERE…RTYK) and 1216-1261 (RRRK…VECR). A phosphoserine mark is found at Ser1113 and Ser1149. The span at 1230 to 1252 (HAGASMSSASSDTGMSPSSSSPP) shows a compositional bias: low complexity.

As to quaternary structure, identified in mSin3A corepressor complexes together with SIN3A, SIN3B, RBBP4, RBBP7, SAP30, BRMS1, HDAC1 and HDAC2. Interacts with BRMS1. Interacts with RB1. Interacts with ARID4B. Interacts with AR. In terms of tissue distribution, expressed in Sertoli cells of the testis.

The protein resides in the nucleus. Functionally, DNA-binding protein which modulates activity of several transcription factors including RB1 (retinoblastoma-associated protein) and AR (androgen receptor). May function as part of an mSin3A repressor complex. Has no intrinsic transcriptional activity. Plays a role in the regulation of epigenetic modifications at the PWS/AS imprinting center near the SNRPN promoter, where it might function as part of a complex with RB1 and ARID4B. Involved in spermatogenesis, together with ARID4B, where it acts as a transcriptional coactivator for AR and enhances expression of genes required for sperm maturation. Regulates expression of the tight junction protein CLDN3 in the testis, which is important for integrity of the blood-testis barrier. Plays a role in myeloid homeostasis where it regulates the histone methylation state of bone marrow cells and expression of various genes involved in hematopoiesis. May function as a leukemia suppressor. The chain is AT-rich interactive domain-containing protein 4A from Mus musculus (Mouse).